The primary structure comprises 238 residues: Phosphoribosylaminoimidazole-succinocarboxamide synthase (238 aa).

Belongs to the SAICAR synthetase family.

It catalyses the reaction 5-amino-1-(5-phospho-D-ribosyl)imidazole-4-carboxylate + L-aspartate + ATP = (2S)-2-[5-amino-1-(5-phospho-beta-D-ribosyl)imidazole-4-carboxamido]succinate + ADP + phosphate + 2 H(+). It participates in purine metabolism; IMP biosynthesis via de novo pathway; 5-amino-1-(5-phospho-D-ribosyl)imidazole-4-carboxamide from 5-amino-1-(5-phospho-D-ribosyl)imidazole-4-carboxylate: step 1/2. The sequence is that of Phosphoribosylaminoimidazole-succinocarboxamide synthase from Methanococcoides burtonii (strain DSM 6242 / NBRC 107633 / OCM 468 / ACE-M).